The chain runs to 62 residues: DNA-binding protein 7 (62 aa).

It belongs to the 7 kDa DNA-binding/endoribonuclease P2 family. Monomer.

It is found in the cytoplasm. In terms of biological role, can constrain negative DNA supercoils. May be involved in maintaining the integrity of the genome at high temperature. The protein is DNA-binding protein 7 of Metallosphaera cuprina (strain Ar-4).